Consider the following 361-residue polypeptide: Anthranilate phosphoribosyltransferase (361 aa).

5-phospho-alpha-D-ribose 1-diphosphate is bound by residues Gly-101, 104-105 (GD), Thr-109, 111-114 (NIST), 129-137 (KHGNRGVSS), and Ser-141. Gly-101 contributes to the anthranilate binding site. Mg(2+) is bound at residue Ser-113. Residue Asn-132 coordinates anthranilate. Arg-187 is an anthranilate binding site. 2 residues coordinate Mg(2+): Asp-245 and Glu-246.

Belongs to the anthranilate phosphoribosyltransferase family. As to quaternary structure, homodimer. It depends on Mg(2+) as a cofactor.

The enzyme catalyses N-(5-phospho-beta-D-ribosyl)anthranilate + diphosphate = 5-phospho-alpha-D-ribose 1-diphosphate + anthranilate. It participates in amino-acid biosynthesis; L-tryptophan biosynthesis; L-tryptophan from chorismate: step 2/5. Its function is as follows. Catalyzes the transfer of the phosphoribosyl group of 5-phosphorylribose-1-pyrophosphate (PRPP) to anthranilate to yield N-(5'-phosphoribosyl)-anthranilate (PRA). The chain is Anthranilate phosphoribosyltransferase from Shewanella denitrificans (strain OS217 / ATCC BAA-1090 / DSM 15013).